The sequence spans 167 residues: CKLF-like MARVEL transmembrane domain-containing protein 7 (167 aa).

In terms of domain architecture, MARVEL spans 32 to 158 (YPLTHGALFK…SLWLSYKITC (127 aa)). 4 consecutive transmembrane segments (helical) span residues 35–55 (THGALFKVAQMVTLLIAFICV), 69–89 (FEVVTMCDLIMILIFYLVHLF), 102–122 (LSELLHYLIGTLLLLIASIVI), and 132–152 (LVAGAIFGFLASFLCLASLWL).

Belongs to the chemokine-like factor family.

Its subcellular location is the membrane. The chain is CKLF-like MARVEL transmembrane domain-containing protein 7 (Cmtm7) from Mus musculus (Mouse).